Consider the following 151-residue polypeptide: Large ribosomal subunit protein bL9 (151 aa).

This sequence belongs to the bacterial ribosomal protein bL9 family.

In terms of biological role, binds to the 23S rRNA. In Desulfosudis oleivorans (strain DSM 6200 / JCM 39069 / Hxd3) (Desulfococcus oleovorans), this protein is Large ribosomal subunit protein bL9.